A 454-amino-acid chain; its full sequence is GTPase Obg (454 aa).

One can recognise an Obg domain in the interval 2 to 159; the sequence is SDFVDEAVLH…VDIRLELKTI (158 aa). Residues 60-87 form a disordered region; sequence YQRRPHRKAENGAPGQGSNRSGASGADL. One can recognise an OBG-type G domain in the interval 160–335; sequence ADVGLVGFPS…LAYALGEQVA (176 aa). Residues 166-173, 191-195, 212-215, 287-290, and 316-318 each bind GTP; these read GFPSAGKS, FTTLV, DVPG, NKID, and SAA. Mg(2+)-binding residues include serine 173 and threonine 193. An OCT domain is found at 353 to 435; that stretch reads PREIGEIPFQ…DNPVVFDWDP (83 aa).

Belongs to the TRAFAC class OBG-HflX-like GTPase superfamily. OBG GTPase family. In terms of assembly, monomer. The cofactor is Mg(2+).

It localises to the cytoplasm. In terms of biological role, an essential GTPase which binds GTP, GDP and possibly (p)ppGpp with moderate affinity, with high nucleotide exchange rates and a fairly low GTP hydrolysis rate. Plays a role in control of the cell cycle, stress response, ribosome biogenesis and in those bacteria that undergo differentiation, in morphogenesis control. In Thermobifida fusca (strain YX), this protein is GTPase Obg.